A 147-amino-acid polypeptide reads, in one-letter code: Deoxyuridine 5'-triphosphate nucleotidohydrolase (147 aa).

Substrate contacts are provided by residues 63-65 (RSG), asparagine 76, and 80-82 (TID).

The protein belongs to the dUTPase family. The cofactor is Mg(2+).

It carries out the reaction dUTP + H2O = dUMP + diphosphate + H(+). Its pathway is pyrimidine metabolism; dUMP biosynthesis; dUMP from dCTP (dUTP route): step 2/2. In terms of biological role, this enzyme is involved in nucleotide metabolism: it produces dUMP, the immediate precursor of thymidine nucleotides and it decreases the intracellular concentration of dUTP so that uracil cannot be incorporated into DNA. This chain is Deoxyuridine 5'-triphosphate nucleotidohydrolase, found in Chlamydia felis (strain Fe/C-56) (Chlamydophila felis).